We begin with the raw amino-acid sequence, 211 residues long: Pyridoxine/pyridoxamine 5'-phosphate oxidase (211 aa).

Substrate-binding positions include 7–10 (RREY) and K65. FMN-binding positions include 60–65 (RIVLLK), 75–76 (YT), R81, K82, and Q104. Residues Y122, R126, and S130 each contribute to the substrate site. Residues 139–140 (QS) and W184 contribute to the FMN site. 190–192 (RLH) is a substrate binding site. R194 is a binding site for FMN.

It belongs to the pyridoxamine 5'-phosphate oxidase family. Homodimer. FMN is required as a cofactor.

It catalyses the reaction pyridoxamine 5'-phosphate + O2 + H2O = pyridoxal 5'-phosphate + H2O2 + NH4(+). The catalysed reaction is pyridoxine 5'-phosphate + O2 = pyridoxal 5'-phosphate + H2O2. Its pathway is cofactor metabolism; pyridoxal 5'-phosphate salvage; pyridoxal 5'-phosphate from pyridoxamine 5'-phosphate: step 1/1. It participates in cofactor metabolism; pyridoxal 5'-phosphate salvage; pyridoxal 5'-phosphate from pyridoxine 5'-phosphate: step 1/1. In terms of biological role, catalyzes the oxidation of either pyridoxine 5'-phosphate (PNP) or pyridoxamine 5'-phosphate (PMP) into pyridoxal 5'-phosphate (PLP). The chain is Pyridoxine/pyridoxamine 5'-phosphate oxidase from Vibrio cholerae serotype O1 (strain ATCC 39541 / Classical Ogawa 395 / O395).